Consider the following 125-residue polypeptide: Holo-[acyl-carrier-protein] synthase (125 aa).

Mg(2+) is bound by residues D8 and E57.

Belongs to the P-Pant transferase superfamily. AcpS family. Mg(2+) is required as a cofactor.

The protein localises to the cytoplasm. The enzyme catalyses apo-[ACP] + CoA = holo-[ACP] + adenosine 3',5'-bisphosphate + H(+). In terms of biological role, transfers the 4'-phosphopantetheine moiety from coenzyme A to a Ser of acyl-carrier-protein. This is Holo-[acyl-carrier-protein] synthase from Nitrosomonas europaea (strain ATCC 19718 / CIP 103999 / KCTC 2705 / NBRC 14298).